The sequence spans 245 residues: Membrane-spanning 4-domains subfamily A member 15 (245 aa).

The interval 1 to 30 (MWERRGRGESAAGTAAVASRNASGLRPPPA) is disordered. Transmembrane regions (helical) follow at residues 78 to 98 (GTVQ…LLMV), 103 to 123 (LGML…FIIS), 147 to 167 (ILSA…FGVT), and 176 to 196 (LAVL…ATHF).

It belongs to the MS4A family.

Its subcellular location is the membrane. In terms of biological role, may be involved in signal transduction as a component of a multimeric receptor complex. This Mus musculus (Mouse) protein is Membrane-spanning 4-domains subfamily A member 15 (Ms4a15).